We begin with the raw amino-acid sequence, 272 residues long: NH(3)-dependent NAD(+) synthetase (272 aa).

Position 45–52 (45–52) interacts with ATP; sequence GISGGQDS. Aspartate 51 is a binding site for Mg(2+). Arginine 138 lines the deamido-NAD(+) pocket. Threonine 158 contributes to the ATP binding site. Residue glutamate 163 coordinates Mg(2+). Residues lysine 171 and aspartate 178 each contribute to the deamido-NAD(+) site. ATP is bound by residues lysine 187 and threonine 209. 258–259 contacts deamido-NAD(+); that stretch reads HK.

It belongs to the NAD synthetase family. In terms of assembly, homodimer.

It catalyses the reaction deamido-NAD(+) + NH4(+) + ATP = AMP + diphosphate + NAD(+) + H(+). It participates in cofactor biosynthesis; NAD(+) biosynthesis; NAD(+) from deamido-NAD(+) (ammonia route): step 1/1. Its function is as follows. Catalyzes the ATP-dependent amidation of deamido-NAD to form NAD. Uses ammonia as a nitrogen source. This Bacillus licheniformis (strain ATCC 14580 / DSM 13 / JCM 2505 / CCUG 7422 / NBRC 12200 / NCIMB 9375 / NCTC 10341 / NRRL NRS-1264 / Gibson 46) protein is NH(3)-dependent NAD(+) synthetase.